The chain runs to 460 residues: Chromosomal replication initiator protein DnaA (460 aa).

Residues 1-78 (MENFWQACSA…VPVEVQFVLD (78 aa)) are domain I, interacts with DnaA modulators. Residues 78-123 (DPRLVAARRPAAQASVVSDRADDVPSNVLEPIPSNATDHTPRRDQS) are domain II. Residues 124-340 (RINTALTFDS…GALRKILAYS (217 aa)) form a domain III, AAA+ region region. ATP is bound by residues Gly168, Gly170, Lys171, and Thr172. The interval 341 to 460 (RFHGKDITIE…LHVLEQTLKG (120 aa)) is domain IV, binds dsDNA.

This sequence belongs to the DnaA family. Oligomerizes as a right-handed, spiral filament on DNA at oriC.

The protein localises to the cytoplasm. Functionally, plays an essential role in the initiation and regulation of chromosomal replication. ATP-DnaA binds to the origin of replication (oriC) to initiate formation of the DNA replication initiation complex once per cell cycle. Binds the DnaA box (a 9 base pair repeat at the origin) and separates the double-stranded (ds)DNA. Forms a right-handed helical filament on oriC DNA; dsDNA binds to the exterior of the filament while single-stranded (ss)DNA is stabiized in the filament's interior. The ATP-DnaA-oriC complex binds and stabilizes one strand of the AT-rich DNA unwinding element (DUE), permitting loading of DNA polymerase. After initiation quickly degrades to an ADP-DnaA complex that is not apt for DNA replication. Binds acidic phospholipids. This is Chromosomal replication initiator protein DnaA from Herminiimonas arsenicoxydans.